The sequence spans 295 residues: Small ribosomal subunit protein uS2 (295 aa).

Ser-2 bears the N-acetylserine mark. Position 43 is a phosphoserine (Ser-43). Lys-52 bears the N6-acetyllysine mark. The tract at residues 54–113 (TWEKLLLAARAIVAIENPADVSVISSRNTGQRAVLKFAAATGATPIAGRFTPGTFTNQIQ) is interaction with PPP1R16B. Lys-89 is subject to N6-acetyllysine; alternate. Residue Lys-89 forms a Glycyl lysine isopeptide (Lys-Gly) (interchain with G-Cter in SUMO2); alternate linkage. Thr-97 is subject to Phosphothreonine. Laminin-binding regions lie at residues 161–180 (IPCNNKGAHSVGLMWWMLAR) and 205–229 (RDPEEIEKEEQAAAEKAVTKEEFQG). [DE]-W-[ST] repeat units lie at residues 230 to 232 (EWT), 247 to 249 (DWS), 266 to 268 (DWS), 275 to 277 (DWS), and 293 to 295 (EWS). Residues 242-295 (QPEVADWSEGVQVPSVPIQQFPTEDWSAQPATEDWSAAPTAQATEWVGATTEWS) form a laminin-binding region. Residues 266–295 (DWSAQPATEDWSAAPTAQATEWVGATTEWS) form a disordered region.

The protein belongs to the universal ribosomal protein uS2 family. As to quaternary structure, monomer (37LRP) and homodimer (67LR). Component of the small ribosomal subunit. Mature ribosomes consist of a small (40S) and a large (60S) subunit. The 40S subunit contains about 33 different proteins and 1 molecule of RNA (18S). The 60S subunit contains about 49 different proteins and 3 molecules of RNA (28S, 5.8S and 5S). Interacts with RPS21. Interacts with several laminins including at least LAMB1. Interacts with MDK. The mature dimeric form interacts with PPP1R16B (via its fourth ankyrin repeat). Interacts with PPP1CA only in the presence of PPP1R16B. In terms of processing, acylated. Acylation may be a prerequisite for conversion of the monomeric 37 kDa laminin receptor precursor (37LRP) to the mature dimeric 67 kDa laminin receptor (67LR), and may provide a mechanism for membrane association. Cleaved by stromelysin-3 (ST3) at the cell surface. Cleavage by stromelysin-3 may be a mechanism to alter cell-extracellular matrix interactions. Expressed in most neurons and in a subset of glial cells. The overall distribution of LR correlates with that reported for laminin-1 but also with brain regions classically associated with prion-related neurodegeneration.

It localises to the cell membrane. The protein localises to the cytoplasm. The protein resides in the nucleus. In terms of biological role, required for the assembly and/or stability of the 40S ribosomal subunit. Required for the processing of the 20S rRNA-precursor to mature 18S rRNA in a late step of the maturation of 40S ribosomal subunits. Also functions as a cell surface receptor for laminin. Plays a role in cell adhesion to the basement membrane and in the consequent activation of signaling transduction pathways. May play a role in cell fate determination and tissue morphogenesis. Also acts as a receptor for several other ligands, including the pathogenic prion protein, viruses, and bacteria. Acts as a PPP1R16B-dependent substrate of PPP1CA. This chain is Small ribosomal subunit protein uS2 (Rpsa), found in Rattus norvegicus (Rat).